Reading from the N-terminus, the 83-residue chain is MSDNTTLAPPAASQAPATPRKGPPKFKQRQTRQFKSKPPKKGVKGFGDDIPGMEGLGTDITVICPWEAFSHLELHELAQFGII.

Low complexity predominate over residues 1 to 19 (MSDNTTLAPPAASQAPATP). Positions 1–51 (MSDNTTLAPPAASQAPATPRKGPPKFKQRQTRQFKSKPPKKGVKGFGDDIP) are disordered. The segment covering 22 to 43 (GPPKFKQRQTRQFKSKPPKKGV) has biased composition (basic residues).

The protein belongs to the rod/cone cGMP-PDE gamma subunit family. As to quaternary structure, tetramer composed of two catalytic chains (alpha and beta), and two inhibitory chains (gamma).

It catalyses the reaction 3',5'-cyclic GMP + H2O = GMP + H(+). Its function is as follows. Participates in processes of transmission and amplification of the visual signal. cGMP-PDEs are the effector molecules in G-protein-mediated phototransduction in vertebrate rods and cones. The sequence is that of Retinal cone rhodopsin-sensitive cGMP 3',5'-cyclic phosphodiesterase subunit gamma (PDE6H) from Ictidomys tridecemlineatus (Thirteen-lined ground squirrel).